The primary structure comprises 101 residues: MEPVDPRLEPWKHPGSQPKTACTNCYCKKCCFHCQVCFITKGLGISYGRKKRRQRRRAPPDSEVHQVSLPKQPASQPQGDPTGPKESKKKVERETETDPVH.

Residues 1–24 are interaction with human CREBBP; the sequence is MEPVDPRLEPWKHPGSQPKTACTN. The interval 1-48 is transactivation; sequence MEPVDPRLEPWKHPGSQPKTACTNCYCKKCCFHCQVCFITKGLGISYG. The Zn(2+) site is built by Cys-22, Cys-25, and Cys-27. The cysteine-rich stretch occupies residues 22–37; sequence CTNCYCKKCCFHCQVC. Lys-28 bears the N6-acetyllysine; by host PCAF mark. Residues Cys-30, His-33, Cys-34, and Cys-37 each contribute to the Zn(2+) site. The interval 38-48 is core; it reads FITKGLGISYG. The span at 48 to 57 shows a compositional bias: basic residues; it reads GRKKRRQRRR. Positions 48–101 are disordered; the sequence is GRKKRRQRRRAPPDSEVHQVSLPKQPASQPQGDPTGPKESKKKVERETETDPVH. The short motif at 49 to 57 is the Nuclear localization signal, RNA-binding (TAR), and protein transduction element; the sequence is RKKRRQRRR. The interval 49–86 is interaction with the host capping enzyme RNGTT; it reads RKKRRQRRRAPPDSEVHQVSLPKQPASQPQGDPTGPKE. Residues Lys-50 and Lys-51 each carry the N6-acetyllysine; by host EP300 and GCN5L2 modification. 2 positions are modified to asymmetric dimethylarginine; by host PRMT6: Arg-52 and Arg-53. Lys-71 participates in a covalent cross-link: Glycyl lysine isopeptide (Lys-Gly) (interchain with G-Cter in ubiquitin). Residues 83-101 are compositionally biased toward basic and acidic residues; the sequence is GPKESKKKVERETETDPVH.

It belongs to the lentiviruses Tat family. Interacts with host CCNT1. Associates with the P-TEFb complex composed at least of Tat, P-TEFb (CDK9 and CCNT1), TAR RNA, RNA Pol II. Recruits the HATs CREBBP, TAF1/TFIID, EP300, PCAF and GCN5L2. Interacts with host KAT5/Tip60; this interaction targets the latter to degradation. Interacts with the host deacetylase SIRT1. Interacts with host capping enzyme RNGTT; this interaction stimulates RNGTT. Binds to host KDR, and to the host integrins ITGAV/ITGB3 and ITGA5/ITGB1. Interacts with host KPNB1/importin beta-1 without previous binding to KPNA1/importin alpha-1. Interacts with EIF2AK2. Interacts with host nucleosome assembly protein NAP1L1; this interaction may be required for the transport of Tat within the nucleus, since the two proteins interact at the nuclear rim. Interacts with host C1QBP/SF2P32; this interaction involves lysine-acetylated Tat. Interacts with the host chemokine receptors CCR2, CCR3 and CXCR4. Interacts with host DPP4/CD26; this interaction may trigger an anti-proliferative effect. Interacts with host LDLR. Interacts with the host extracellular matrix metalloproteinase MMP1. Interacts with host PRMT6; this interaction mediates Tat's methylation. Interacts with, and is ubiquitinated by MDM2/Hdm2. Interacts with host PSMC3 and HTATIP2. Interacts with STAB1; this interaction may overcome SATB1-mediated repression of IL2 and IL2RA (interleukin) in T cells by binding to the same domain than HDAC1. Interacts (when acetylated) with human CDK13, thereby increasing HIV-1 mRNA splicing and promoting the production of the doubly spliced HIV-1 protein Nef. Interacts with host TBP; this interaction modulates the activity of transcriptional pre-initiation complex. Interacts with host RELA. Interacts with host PLSCR1; this interaction negatively regulates Tat transactivation activity by altering its subcellular distribution. Asymmetrical arginine methylation by host PRMT6 seems to diminish the transactivation capacity of Tat and affects the interaction with host CCNT1. Post-translationally, acetylation by EP300, CREBBP, GCN5L2/GCN5 and PCAF regulates the transactivation activity of Tat. EP300-mediated acetylation of Lys-50 promotes dissociation of Tat from the TAR RNA through the competitive binding to PCAF's bromodomain. In addition, the non-acetylated Tat's N-terminus can also interact with PCAF. PCAF-mediated acetylation of Lys-28 enhances Tat's binding to CCNT1. Lys-50 is deacetylated by SIRT1. In terms of processing, polyubiquitination by host MDM2 does not target Tat to degradation, but activates its transactivation function and fosters interaction with CCNT1 and TAR RNA. Phosphorylated by EIF2AK2 on serine and threonine residues adjacent to the basic region important for TAR RNA binding and function. Phosphorylation of Tat by EIF2AK2 is dependent on the prior activation of EIF2AK2 by dsRNA.

The protein localises to the host nucleus. It localises to the host nucleolus. It is found in the host cytoplasm. Its subcellular location is the secreted. Functionally, transcriptional activator that increases RNA Pol II processivity, thereby increasing the level of full-length viral transcripts. Recognizes a hairpin structure at the 5'-LTR of the nascent viral mRNAs referred to as the transactivation responsive RNA element (TAR) and recruits the cyclin T1-CDK9 complex (P-TEFb complex) that will in turn hyperphosphorylate the RNA polymerase II to allow efficient elongation. The CDK9 component of P-TEFb and other Tat-activated kinases hyperphosphorylate the C-terminus of RNA Pol II that becomes stabilized and much more processive. Other factors such as HTATSF1/Tat-SF1, SUPT5H/SPT5, and HTATIP2 are also important for Tat's function. Besides its effect on RNA Pol II processivity, Tat induces chromatin remodeling of proviral genes by recruiting the histone acetyltransferases (HATs) CREBBP, EP300 and PCAF to the chromatin. This also contributes to the increase in proviral transcription rate, especially when the provirus integrates in transcriptionally silent region of the host genome. To ensure maximal activation of the LTR, Tat mediates nuclear translocation of NF-kappa-B by interacting with host RELA. Through its interaction with host TBP, Tat may also modulate transcription initiation. Tat can reactivate a latently infected cell by penetrating in it and transactivating its LTR promoter. In the cytoplasm, Tat is thought to act as a translational activator of HIV-1 mRNAs. In terms of biological role, extracellular circulating Tat can be endocytosed by surrounding uninfected cells via the binding to several surface receptors such as CD26, CXCR4, heparan sulfate proteoglycans (HSPG) or LDLR. Neurons are rarely infected, but they internalize Tat via their LDLR. Through its interaction with nuclear HATs, Tat is potentially able to control the acetylation-dependent cellular gene expression. Modulates the expression of many cellular genes involved in cell survival, proliferation or in coding for cytokines or cytokine receptors. Tat plays a role in T-cell and neurons apoptosis. Tat induced neurotoxicity and apoptosis probably contribute to neuroAIDS. Circulating Tat also acts as a chemokine-like and/or growth factor-like molecule that binds to specific receptors on the surface of the cells, affecting many cellular pathways. In the vascular system, Tat binds to ITGAV/ITGB3 and ITGA5/ITGB1 integrins dimers at the surface of endothelial cells and competes with bFGF for heparin-binding sites, leading to an excess of soluble bFGF. The protein is Protein Tat of Human immunodeficiency virus type 1 group M subtype B (isolate SF162) (HIV-1).